Here is a 119-residue protein sequence, read N- to C-terminus: Large ribosomal subunit protein uL22 (119 aa).

The protein belongs to the universal ribosomal protein uL22 family. As to quaternary structure, part of the 50S ribosomal subunit.

In terms of biological role, this protein binds specifically to 23S rRNA; its binding is stimulated by other ribosomal proteins, e.g. L4, L17, and L20. It is important during the early stages of 50S assembly. It makes multiple contacts with different domains of the 23S rRNA in the assembled 50S subunit and ribosome. The globular domain of the protein is located near the polypeptide exit tunnel on the outside of the subunit, while an extended beta-hairpin is found that lines the wall of the exit tunnel in the center of the 70S ribosome. In Rickettsia akari (strain Hartford), this protein is Large ribosomal subunit protein uL22.